A 178-amino-acid polypeptide reads, in one-letter code: MORN repeat-containing protein 5 (178 aa).

MORN repeat units lie at residues 8-30, 31-53, and 54-75; these read YDGD…THTR, YVGE…NGSK, and YEGT…DGLK.

It localises to the cell projection. It is found in the cilium. The protein localises to the flagellum. This chain is MORN repeat-containing protein 5 (morn5), found in Danio rerio (Zebrafish).